Reading from the N-terminus, the 236-residue chain is Ubiquinone biosynthesis O-methyltransferase (236 aa).

Positions 39, 59, 80, and 124 each coordinate S-adenosyl-L-methionine.

It belongs to the methyltransferase superfamily. UbiG/COQ3 family.

It catalyses the reaction a 3-demethylubiquinol + S-adenosyl-L-methionine = a ubiquinol + S-adenosyl-L-homocysteine + H(+). The catalysed reaction is a 3-(all-trans-polyprenyl)benzene-1,2-diol + S-adenosyl-L-methionine = a 2-methoxy-6-(all-trans-polyprenyl)phenol + S-adenosyl-L-homocysteine + H(+). It participates in cofactor biosynthesis; ubiquinone biosynthesis. In terms of biological role, O-methyltransferase that catalyzes the 2 O-methylation steps in the ubiquinone biosynthetic pathway. The sequence is that of Ubiquinone biosynthesis O-methyltransferase from Shewanella sp. (strain ANA-3).